We begin with the raw amino-acid sequence, 529 residues long: Bifunctional purine biosynthesis protein PurH (529 aa).

The region spanning 1–148 (MQQRRPVRRA…KNHKDVAIVV (148 aa)) is the MGS-like domain.

The protein belongs to the PurH family.

The catalysed reaction is (6R)-10-formyltetrahydrofolate + 5-amino-1-(5-phospho-beta-D-ribosyl)imidazole-4-carboxamide = 5-formamido-1-(5-phospho-D-ribosyl)imidazole-4-carboxamide + (6S)-5,6,7,8-tetrahydrofolate. It catalyses the reaction IMP + H2O = 5-formamido-1-(5-phospho-D-ribosyl)imidazole-4-carboxamide. Its pathway is purine metabolism; IMP biosynthesis via de novo pathway; 5-formamido-1-(5-phospho-D-ribosyl)imidazole-4-carboxamide from 5-amino-1-(5-phospho-D-ribosyl)imidazole-4-carboxamide (10-formyl THF route): step 1/1. It participates in purine metabolism; IMP biosynthesis via de novo pathway; IMP from 5-formamido-1-(5-phospho-D-ribosyl)imidazole-4-carboxamide: step 1/1. The sequence is that of Bifunctional purine biosynthesis protein PurH from Salmonella enteritidis PT4 (strain P125109).